We begin with the raw amino-acid sequence, 397 residues long: Metallophosphoesterase 1 (397 aa).

A helical transmembrane segment spans residues 27-47 (IAVVFAVLLFCEFLIYYLAIF). A divalent metal cation is bound by residues D77, D119, N157, H250, H304, and H306. A helical membrane pass occupies residues 357–377 (VVLIIYCGMVGFLVVLTLTHF). Residues 393-397 (KRKTR) carry the Di-lysine motif motif.

Belongs to the metallophosphoesterase superfamily. MPPE1 family. Interacts with GPI-anchor proteins (via the GPI portion). Interacts with TMED10. Mn(2+) serves as cofactor.

It localises to the endoplasmic reticulum-Golgi intermediate compartment membrane. Its function is as follows. Metallophosphoesterase that catalyzes the removal of a side-chain ethanolamine-phosphate (EtNP) from the second mannose of the GPI-anchor protein intermediate. Participates in the glycan remodeling steps of GPI-anchor maturation to allow an efficient transport of GPI-anchor proteins from the endoplasmic reticulum to the Golgi. In Pongo abelii (Sumatran orangutan), this protein is Metallophosphoesterase 1.